Reading from the N-terminus, the 398-residue chain is Homeobox protein knotted-1-like 1 (398 aa).

Disordered regions lie at residues 20 to 61 (SPIS…HHHQ), 78 to 102 (NCFR…ASSS), and 241 to 273 (LNNP…EIDP). Residues 23-56 (SSSNKNDNTSDTNNNNNNNNSSNYGPGYNNTNNN) show a composition bias toward low complexity. Polar residues predominate over residues 87-102 (PNNNNNPSVKSEASSS). In terms of domain architecture, ELK spans 279 to 299 (ELKNHLLKKYSGYLSSLKQEL). The homeobox; TALE-type DNA-binding region spans 300 to 363 (SKKKKKGKLP…NQRKRHWKPS (64 aa)).

The protein belongs to the TALE/KNOX homeobox family. May form heterodimeric complex with the TALE/BELL proteins BEL1, BLH2, BLH8/PNF and BLH9/PNY. Interacts with OFP1, OFP2, OFP4, OFP6 and OFP12. Interacts with CCT7 and CCT8. Interacts with KNATM-B. Binds to AGO10/PNH. Interacts with BZIP30. In terms of tissue distribution, expressed in the vegetative meristem. Present in the base of flower primordia.

The protein resides in the nucleus. Functionally, may play a role in meristem function, and may be involved in maintaining cells in an undifferentiated, meristematic state, and its expression disappears at the same time the shoot apex undergoes the transition from vegetative to reproductive development. Positive regulator of LATERAL ORGAN BOUNDARIES (LOB). Probably binds to the DNA sequence 5'-TGAC-3'. Able to traffic from the L1 to the L2/L3 layers of the meristem, presumably through plasmodesmata. The protein is Homeobox protein knotted-1-like 1 (KNAT1) of Arabidopsis thaliana (Mouse-ear cress).